The chain runs to 557 residues: Membrane protein insertase YidC (557 aa).

The next 5 membrane-spanning stretches (helical) occupy residues Thr6–His26, Ile219–Asp239, Ile367–Phe387, Leu437–Leu457, and Met514–Val534.

This sequence belongs to the OXA1/ALB3/YidC family. Type 1 subfamily. As to quaternary structure, interacts with the Sec translocase complex via SecD. Specifically interacts with transmembrane segments of nascent integral membrane proteins during membrane integration.

It localises to the cell inner membrane. Required for the insertion and/or proper folding and/or complex formation of integral membrane proteins into the membrane. Involved in integration of membrane proteins that insert both dependently and independently of the Sec translocase complex, as well as at least some lipoproteins. Aids folding of multispanning membrane proteins. This chain is Membrane protein insertase YidC, found in Polynucleobacter asymbioticus (strain DSM 18221 / CIP 109841 / QLW-P1DMWA-1) (Polynucleobacter necessarius subsp. asymbioticus).